A 172-amino-acid polypeptide reads, in one-letter code: MSEKEKKELTQECEELKEKYKELEEYAKRLKAEYENYREEVAREKRELIKNANEYLISKLIPVLDDFERALNQGEKGDAFYEGVKMIYKKLLNVLEKEGLTKIHVGEKFDPFEHEAVERVETEDVEEYTVLEVVESGYKFHGKVLKPAKVKVAVKPRKKEAEKVEEPSDKKE.

Belongs to the GrpE family. In terms of assembly, homodimer.

Its subcellular location is the cytoplasm. Participates actively in the response to hyperosmotic and heat shock by preventing the aggregation of stress-denatured proteins, in association with DnaK and GrpE. It is the nucleotide exchange factor for DnaK and may function as a thermosensor. Unfolded proteins bind initially to DnaJ; upon interaction with the DnaJ-bound protein, DnaK hydrolyzes its bound ATP, resulting in the formation of a stable complex. GrpE releases ADP from DnaK; ATP binding to DnaK triggers the release of the substrate protein, thus completing the reaction cycle. Several rounds of ATP-dependent interactions between DnaJ, DnaK and GrpE are required for fully efficient folding. This is Protein GrpE from Thermotoga sp. (strain RQ2).